Reading from the N-terminus, the 357-residue chain is Peptide chain release factor 1 (357 aa).

Position 233 is an N5-methylglutamine (Gln-233).

It belongs to the prokaryotic/mitochondrial release factor family. Methylated by PrmC. Methylation increases the termination efficiency of RF1.

It localises to the cytoplasm. Its function is as follows. Peptide chain release factor 1 directs the termination of translation in response to the peptide chain termination codons UAG and UAA. The chain is Peptide chain release factor 1 from Flavobacterium psychrophilum (strain ATCC 49511 / DSM 21280 / CIP 103535 / JIP02/86).